Here is a 491-residue protein sequence, read N- to C-terminus: UDP-N-acetylmuramate--L-alanine ligase (491 aa).

115–121 (GTHGKTT) serves as a coordination point for ATP.

The protein belongs to the MurCDEF family.

It is found in the cytoplasm. The catalysed reaction is UDP-N-acetyl-alpha-D-muramate + L-alanine + ATP = UDP-N-acetyl-alpha-D-muramoyl-L-alanine + ADP + phosphate + H(+). Its pathway is cell wall biogenesis; peptidoglycan biosynthesis. In terms of biological role, cell wall formation. The sequence is that of UDP-N-acetylmuramate--L-alanine ligase from Parvibaculum lavamentivorans (strain DS-1 / DSM 13023 / NCIMB 13966).